A 549-amino-acid polypeptide reads, in one-letter code: Oxygen-dependent choline dehydrogenase (549 aa).

D4–E33 is a binding site for FAD. The Proton acceptor role is filled by H465.

Belongs to the GMC oxidoreductase family. It depends on FAD as a cofactor.

It carries out the reaction choline + A = betaine aldehyde + AH2. The enzyme catalyses betaine aldehyde + NAD(+) + H2O = glycine betaine + NADH + 2 H(+). It functions in the pathway amine and polyamine biosynthesis; betaine biosynthesis via choline pathway; betaine aldehyde from choline (cytochrome c reductase route): step 1/1. In terms of biological role, involved in the biosynthesis of the osmoprotectant glycine betaine. Catalyzes the oxidation of choline to betaine aldehyde and betaine aldehyde to glycine betaine at the same rate. This is Oxygen-dependent choline dehydrogenase from Sinorhizobium fredii (strain NBRC 101917 / NGR234).